The primary structure comprises 450 residues: MFS-type transporter avaK (450 aa).

8 helical membrane passes run 18 to 38, 100 to 120, 148 to 168, 171 to 191, 244 to 264, 280 to 300, 329 to 349, and 408 to 428; these read VMAL…LSMP, RVVC…SGLL, AVAL…AAPA, ALVA…MLFV, APII…HFLL, LVLV…MPAA, FGFF…ALAF, and GWLG…LVAV.

This sequence belongs to the major facilitator superfamily.

It localises to the membrane. Its pathway is secondary metabolite biosynthesis. In terms of biological role, MFS-type transporter; part of the cluster that mediates the biosynthesis of a highly modified cyclo-arginine-tryptophan dipeptide (cRW). The chain is MFS-type transporter avaK from Aspergillus versicolor.